Here is a 262-residue protein sequence, read N- to C-terminus: Small ribosomal subunit protein eS4C (262 aa).

In terms of domain architecture, S4 RNA-binding spans 42-105 (LPLIVFLRNR…GEHFRLVYDI (64 aa)). Thr194 carries the phosphothreonine modification.

The protein belongs to the eukaryotic ribosomal protein eS4 family. As to quaternary structure, component of the small ribosomal subunit (SSU). Mature yeast ribosomes consist of a small (40S) and a large (60S) subunit. The 40S small subunit contains 1 molecule of ribosomal RNA (18S rRNA) and at least 33 different proteins. The large 60S subunit contains 3 rRNA molecules (25S, 5.8S and 5S rRNA) and at least 46 different proteins.

It localises to the cytoplasm. Its function is as follows. Component of the ribosome, a large ribonucleoprotein complex responsible for the synthesis of proteins in the cell. The small ribosomal subunit (SSU) binds messenger RNAs (mRNAs) and translates the encoded message by selecting cognate aminoacyl-transfer RNA (tRNA) molecules. The large subunit (LSU) contains the ribosomal catalytic site termed the peptidyl transferase center (PTC), which catalyzes the formation of peptide bonds, thereby polymerizing the amino acids delivered by tRNAs into a polypeptide chain. The nascent polypeptides leave the ribosome through a tunnel in the LSU and interact with protein factors that function in enzymatic processing, targeting, and the membrane insertion of nascent chains at the exit of the ribosomal tunnel. The protein is Small ribosomal subunit protein eS4C (rps403) of Schizosaccharomyces pombe (strain 972 / ATCC 24843) (Fission yeast).